Reading from the N-terminus, the 479-residue chain is Putative L-cysteine desulfhydrase 2 (479 aa).

Residues 1–36 (MASLQSGGDAAANGVDADVDGAASPPSAKRPRAGAG) are disordered. The span at 7–36 (GGDAAANGVDADVDGAASPPSAKRPRAGAG) shows a compositional bias: low complexity. Lys270 carries the post-translational modification N6-(pyridoxal phosphate)lysine.

Belongs to the class-V pyridoxal-phosphate-dependent aminotransferase family. Requires pyridoxal 5'-phosphate as cofactor.

It catalyses the reaction L-cysteine + H2O = hydrogen sulfide + pyruvate + NH4(+) + H(+). Catalyzes the production of hydrogen sulfide (H2S) from cysteine. The chain is Putative L-cysteine desulfhydrase 2 from Oryza sativa subsp. japonica (Rice).